The following is a 198-amino-acid chain: Nuclear transcription factor Y subunit A-4 (198 aa).

Residues 1 to 47 (MTSSVHELSDNNESHAKKERPDSQTRPQVPSGRSSESIDTNSVYSEP) form a disordered region. Residues 7 to 23 (ELSDNNESHAKKERPDS) show a composition bias toward basic and acidic residues. A compositionally biased stretch (polar residues) spans 24 to 44 (QTRPQVPSGRSSESIDTNSVY). The Subunit association domain (SAD) motif lies at 101–124 (FVNAKQYHGILRRRQSRAKLEARN). The segment at residues 131 to 156 (KPYMHESRHLHAIRRPRGCGGRFLNA) is a DNA-binding region (NFYA/HAP2-type). The tract at residues 136–198 (ESRHLHAIRR…MATSGPNGRS (63 aa)) is disordered. The span at 156 to 166 (AKKENGDHKEE) shows a compositional bias: basic and acidic residues.

This sequence belongs to the NFYA/HAP2 subunit family. As to quaternary structure, heterotrimeric transcription factor composed of three components, NF-YA, NF-YB and NF-YC. NF-YB and NF-YC must interact and dimerize for NF-YA association and DNA binding. Expressed in stems, caulines, and senescent flowers.

Its subcellular location is the nucleus. In terms of biological role, stimulates the transcription of various genes by recognizing and binding to a CCAAT motif in promoters. This chain is Nuclear transcription factor Y subunit A-4 (NFYA4), found in Arabidopsis thaliana (Mouse-ear cress).